The primary structure comprises 167 residues: Arginine repressor (167 aa).

Belongs to the ArgR family.

Its subcellular location is the cytoplasm. It functions in the pathway amino-acid biosynthesis; L-arginine biosynthesis [regulation]. Regulates arginine biosynthesis genes. The sequence is that of Arginine repressor from Mycobacterium leprae (strain Br4923).